A 366-amino-acid polypeptide reads, in one-letter code: Ribosomal RNA large subunit methyltransferase M (366 aa).

S-adenosyl-L-methionine is bound by residues S188, 221 to 224 (CPGG), D240, D260, and D277. K306 acts as the Proton acceptor in catalysis.

Belongs to the class I-like SAM-binding methyltransferase superfamily. RNA methyltransferase RlmE family. RlmM subfamily. In terms of assembly, monomer.

The protein localises to the cytoplasm. The catalysed reaction is cytidine(2498) in 23S rRNA + S-adenosyl-L-methionine = 2'-O-methylcytidine(2498) in 23S rRNA + S-adenosyl-L-homocysteine + H(+). Its function is as follows. Catalyzes the 2'-O-methylation at nucleotide C2498 in 23S rRNA. The chain is Ribosomal RNA large subunit methyltransferase M from Cronobacter sakazakii (strain ATCC BAA-894) (Enterobacter sakazakii).